Here is a 452-residue protein sequence, read N- to C-terminus: Phosphoglucosamine mutase (452 aa).

The active-site Phosphoserine intermediate is serine 98. Residues serine 98, aspartate 239, aspartate 241, and aspartate 243 each contribute to the Mg(2+) site. Serine 98 carries the phosphoserine modification.

Belongs to the phosphohexose mutase family. It depends on Mg(2+) as a cofactor. In terms of processing, activated by phosphorylation.

It carries out the reaction alpha-D-glucosamine 1-phosphate = D-glucosamine 6-phosphate. Its function is as follows. Catalyzes the conversion of glucosamine-6-phosphate to glucosamine-1-phosphate. This chain is Phosphoglucosamine mutase, found in Anaplasma marginale (strain Florida).